We begin with the raw amino-acid sequence, 507 residues long: Cytochrome P450 monooxygenase tpeC (507 aa).

The chain crosses the membrane as a helical span at residues threonine 24 to phenylalanine 44. Cysteine 449 contacts heme.

This sequence belongs to the cytochrome P450 family. Requires heme as cofactor.

The protein localises to the membrane. It participates in secondary metabolite biosynthesis. Cytochrome P450 monooxygenase; part of the gene cluster that mediates the biosynthesis of polyesters containing 2,4-dihydroxy-6-(2-hydroxypropyl)benzoate and 3-hydroxybutyrate moieties, such as talapolyester G, 15G256beta and 15G256beta-2; as well as to oxidized derivatives such as 15G256alpha. The biosynthesis of the polyesters probably starts with the formation of the diketide 3-hydroxybutyryl-S-ACP catalyzed by the partially reducing polyketide synthase tpeA. The acceptance of 3-hydroxybutyryl by the non-reducing polyketide synthase tpeB would initiate further elongation and cyclization, catalyzed by KS and PT, respectively, to form 2,4-dihydroxy-6-(2-hydroxyn-propyl)benzoyl-S-ACP intermediate. The TE domain could catalyze lactonization at this step to yield 6-hydroxymellein as a derailment product. The polyesterification process maybe occurs when additional molecules of 3-hydroxybutyryl are transferred to tpeB. Following the first esterification step, an intramolecular cyclization catalyzed by the TE domain of tpeB would give talarodioxadione 1, whereas the ethyl esterification of talapolyester G perhaps happens spontaneously. Further oxidation by the cytochrome P450 monooxygenase tpeC then leads to the formation of oxidized derivatives. This chain is Cytochrome P450 monooxygenase tpeC, found in Talaromyces stipitatus (strain ATCC 10500 / CBS 375.48 / QM 6759 / NRRL 1006) (Penicillium stipitatum).